The primary structure comprises 90 residues: Conotoxin Im6.2 (90 aa).

An N-terminal signal peptide occupies residues 1-18 (MKLTILLLVAALLVLTQA). Residues 19 to 29 (RTERRRVKSRK) constitute a propeptide that is removed on maturation. 3 disulfide bridges follow: C61–C75, C68–C79, and C74–C84. E89 carries the glutamic acid 1-amide modification.

It belongs to the conotoxin O2 superfamily. In terms of tissue distribution, expressed by the venom duct.

The protein localises to the secreted. Probable neurotoxin. The protein is Conotoxin Im6.2 of Conus imperialis (Imperial cone).